A 162-amino-acid chain; its full sequence is Deoxyuridine 5'-triphosphate nucleotidohydrolase (162 aa).

Residue serine 11 is modified to Phosphoserine. DUTP-binding positions include 83–85, 97–103, glycine 108, arginine 151, and 156–157; these read RSG, GVIDEDY, and FG.

The protein belongs to the dUTPase family. As to quaternary structure, homotrimer. The cofactor is Mg(2+). Post-translationally, phosphorylated in vivo on Ser-11, a reaction that can be catalyzed in vitro by CDC2.

It localises to the nucleus. It carries out the reaction dUTP + H2O = dUMP + diphosphate + H(+). Its pathway is pyrimidine metabolism; dUMP biosynthesis; dUMP from dCTP (dUTP route): step 2/2. Its function is as follows. Catalyzes the cleavage of 2'-deoxyuridine 5'-triphosphate (dUTP) into 2'-deoxyuridine 5'-monophosphate (dUMP) and inorganic pyrophosphate and through its action efficiently prevents uracil misincorporation into DNA and at the same time provides dUMP, the substrate for de novo thymidylate biosynthesis. Inhibits peroxisome proliferator-activated receptor (PPAR) activity by binding of its N-terminal to PPAR, preventing the latter's dimerization with retinoid X receptor. Essential for embryonic development. This Mus musculus (Mouse) protein is Deoxyuridine 5'-triphosphate nucleotidohydrolase (Dut).